A 214-amino-acid chain; its full sequence is Phosphatidylserine decarboxylase proenzyme (214 aa).

Residue Ser-182 is the Schiff-base intermediate with substrate; via pyruvic acid of the active site. Pyruvic acid (Ser); by autocatalysis is present on Ser-182.

It belongs to the phosphatidylserine decarboxylase family. PSD-A subfamily. Heterodimer of a large membrane-associated beta subunit and a small pyruvoyl-containing alpha subunit. It depends on pyruvate as a cofactor. Post-translationally, is synthesized initially as an inactive proenzyme. Formation of the active enzyme involves a self-maturation process in which the active site pyruvoyl group is generated from an internal serine residue via an autocatalytic post-translational modification. Two non-identical subunits are generated from the proenzyme in this reaction, and the pyruvate is formed at the N-terminus of the alpha chain, which is derived from the carboxyl end of the proenzyme. The post-translation cleavage follows an unusual pathway, termed non-hydrolytic serinolysis, in which the side chain hydroxyl group of the serine supplies its oxygen atom to form the C-terminus of the beta chain, while the remainder of the serine residue undergoes an oxidative deamination to produce ammonia and the pyruvoyl prosthetic group on the alpha chain.

It is found in the cell membrane. It carries out the reaction a 1,2-diacyl-sn-glycero-3-phospho-L-serine + H(+) = a 1,2-diacyl-sn-glycero-3-phosphoethanolamine + CO2. It participates in phospholipid metabolism; phosphatidylethanolamine biosynthesis; phosphatidylethanolamine from CDP-diacylglycerol: step 2/2. Functionally, catalyzes the formation of phosphatidylethanolamine (PtdEtn) from phosphatidylserine (PtdSer). The protein is Phosphatidylserine decarboxylase proenzyme of Burkholderia lata (strain ATCC 17760 / DSM 23089 / LMG 22485 / NCIMB 9086 / R18194 / 383).